The chain runs to 556 residues: Genetic interactor of prohibitins 3, mitochondrial (556 aa).

The transit peptide at 1–21 directs the protein to the mitochondrion; that stretch reads MLNLCHALRGVRQFSCSVIVK. The 193-residue stretch at 113-305 folds into the CP-type G domain; sequence ESTLNDILNY…LFDLPGYSTS (193 aa).

Belongs to the TRAFAC class YlqF/YawG GTPase family. GEP3 subfamily.

It localises to the mitochondrion. In terms of biological role, interacts genetically with prohibitins and thus may be involved in the mitochondrial lipid metabolism. The polypeptide is Genetic interactor of prohibitins 3, mitochondrial (GEP3) (Saccharomyces cerevisiae (strain AWRI1631) (Baker's yeast)).